The sequence spans 451 residues: Tubulin alpha chain (451 aa).

Residues 1–4 (MREC) carry the MREC motif motif. Residue glutamine 11 coordinates GTP. An N6-acetyllysine modification is found at lysine 40. 7 residues coordinate GTP: glutamate 71, serine 140, glycine 144, threonine 145, threonine 179, asparagine 206, and asparagine 228. Glutamate 71 lines the Mg(2+) pocket. The active site involves glutamate 254. Residues 432-451 (YEEVGVDSVEGEGEEEGEEY) are disordered. Glutamate 445 is subject to 5-glutamyl polyglutamate.

It belongs to the tubulin family. Dimer of alpha and beta chains. A typical microtubule is a hollow water-filled tube with an outer diameter of 25 nm and an inner diameter of 15 nM. Alpha-beta heterodimers associate head-to-tail to form protofilaments running lengthwise along the microtubule wall with the beta-tubulin subunit facing the microtubule plus end conferring a structural polarity. Microtubules usually have 13 protofilaments but different protofilament numbers can be found in some organisms and specialized cells. Mg(2+) is required as a cofactor. Post-translationally, some glutamate residues at the C-terminus are polyglycylated, resulting in polyglycine chains on the gamma-carboxyl group. Glycylation is mainly limited to tubulin incorporated into axonemes (cilia and flagella) whereas glutamylation is prevalent in neuronal cells, centrioles, axonemes, and the mitotic spindle. Both modifications can coexist on the same protein on adjacent residues, and lowering polyglycylation levels increases polyglutamylation, and reciprocally. The precise function of polyglycylation is still unclear. In terms of processing, some glutamate residues at the C-terminus are polyglutamylated, resulting in polyglutamate chains on the gamma-carboxyl group. Polyglutamylation plays a key role in microtubule severing by spastin (SPAST). SPAST preferentially recognizes and acts on microtubules decorated with short polyglutamate tails: severing activity by SPAST increases as the number of glutamates per tubulin rises from one to eight, but decreases beyond this glutamylation threshold. Acetylation of alpha chains at Lys-40 is located inside the microtubule lumen. This modification has been correlated with increased microtubule stability, intracellular transport and ciliary assembly. Post-translationally, undergoes a tyrosination/detyrosination cycle, the cyclic removal and re-addition of a C-terminal tyrosine residue by the enzymes tubulin tyrosine carboxypeptidase (MATCAP, VASH1 or VASH2) and tubulin tyrosine ligase (TTL), respectively. In terms of processing, tyrosination promotes microtubule interaction with CAP-Gly microtubule plus-end tracking proteins. Tyrosinated tubulins regulate the initiation of dynein-driven motility. Detyrosination is involved in metaphase plate congression by guiding chromosomes during mitosis. Detyrosination increases microtubules-dependent mechanotransduction in dystrophic cardiac and skeletal muscle. In cardiomyocytes, detyrosinated microtubules are required to resist to contractile compression during contraction.

Its subcellular location is the cytoplasm. The protein localises to the cytoskeleton. The catalysed reaction is GTP + H2O = GDP + phosphate + H(+). Tubulin is the major constituent of microtubules, a cylinder consisting of laterally associated linear protofilaments composed of alpha- and beta-tubulin heterodimers. Microtubules grow by the addition of GTP-tubulin dimers to the microtubule end, where a stabilizing cap forms. Below the cap, tubulin dimers are in GDP-bound state, owing to GTPase activity of alpha-tubulin. The chain is Tubulin alpha chain from Torpedo marmorata (Marbled electric ray).